A 174-amino-acid polypeptide reads, in one-letter code: Amino-acid acetyltransferase (174 aa).

Residues 10-148 (PVVRRARTSD…VFDEMCRSYD (139 aa)) form the N-acetyltransferase domain.

Belongs to the acetyltransferase family. In terms of assembly, homodimer and homotetramer.

The enzyme catalyses L-glutamate + acetyl-CoA = N-acetyl-L-glutamate + CoA + H(+). Its pathway is amino-acid biosynthesis; L-arginine biosynthesis; N(2)-acetyl-L-ornithine from L-glutamate: step 1/4. With respect to regulation, inhibited by L-arginine. Catalyzes the conversion of L-glutamate to alpha-N-acetyl-L-glutamate. L-glutamine is a significantly better substrate compared to L-glutamate. The sequence is that of Amino-acid acetyltransferase (argA) from Mycobacterium tuberculosis (strain ATCC 25618 / H37Rv).